The primary structure comprises 229 residues: Biosynthetic peptidoglycan transglycosylase (229 aa).

The chain crosses the membrane as a helical span at residues 11–31 (NLLLALFLVLVAGPVVAVILY).

Belongs to the glycosyltransferase 51 family.

The protein localises to the cell inner membrane. It catalyses the reaction [GlcNAc-(1-&gt;4)-Mur2Ac(oyl-L-Ala-gamma-D-Glu-L-Lys-D-Ala-D-Ala)](n)-di-trans,octa-cis-undecaprenyl diphosphate + beta-D-GlcNAc-(1-&gt;4)-Mur2Ac(oyl-L-Ala-gamma-D-Glu-L-Lys-D-Ala-D-Ala)-di-trans,octa-cis-undecaprenyl diphosphate = [GlcNAc-(1-&gt;4)-Mur2Ac(oyl-L-Ala-gamma-D-Glu-L-Lys-D-Ala-D-Ala)](n+1)-di-trans,octa-cis-undecaprenyl diphosphate + di-trans,octa-cis-undecaprenyl diphosphate + H(+). It participates in cell wall biogenesis; peptidoglycan biosynthesis. Its function is as follows. Peptidoglycan polymerase that catalyzes glycan chain elongation from lipid-linked precursors. The polypeptide is Biosynthetic peptidoglycan transglycosylase (Caulobacter vibrioides (strain ATCC 19089 / CIP 103742 / CB 15) (Caulobacter crescentus)).